Here is a 539-residue protein sequence, read N- to C-terminus: Eukaryotic translation initiation factor 3 subunit L (539 aa).

Positions 306 to 514 (TFSDILLYIQ…IHIADTKVSH (209 aa)) constitute a PCI domain.

This sequence belongs to the eIF-3 subunit L family. Component of the eukaryotic translation initiation factor 3 (eIF-3) complex. The eIF-3 complex interacts with pix.

The protein localises to the cytoplasm. Its function is as follows. Component of the eukaryotic translation initiation factor 3 (eIF-3) complex, which is involved in protein synthesis of a specialized repertoire of mRNAs and, together with other initiation factors, stimulates binding of mRNA and methionyl-tRNAi to the 40S ribosome. The eIF-3 complex specifically targets and initiates translation of a subset of mRNAs involved in cell proliferation. This Drosophila yakuba (Fruit fly) protein is Eukaryotic translation initiation factor 3 subunit L.